The chain runs to 230 residues: Uracil-DNA glycosylase (230 aa).

The active-site Proton acceptor is D70.

The protein belongs to the uracil-DNA glycosylase (UDG) superfamily. UNG family.

Its subcellular location is the cytoplasm. The enzyme catalyses Hydrolyzes single-stranded DNA or mismatched double-stranded DNA and polynucleotides, releasing free uracil.. Its function is as follows. Excises uracil residues from the DNA which can arise as a result of misincorporation of dUMP residues by DNA polymerase or due to deamination of cytosine. This Pseudomonas fluorescens (strain ATCC BAA-477 / NRRL B-23932 / Pf-5) protein is Uracil-DNA glycosylase.